We begin with the raw amino-acid sequence, 3412 residues long: MSGRKAQGKTLGVNMVRRGVRSLSNKIKQKTKQIGNRPGPSRGVQGFIFFFLFNILTGKKLTTHLKRLWRMLDPRQGLTVLRKVKRVVASLMRGLSSRKRRSSEMTMMPLLILSMVILGGGVTLVRKNRWLLLNVTAEDLGKTFSVGTGNCTTNILEAKYWCPDSMEYNCPNLSPREEPDDIDCWCYGVENVRVAYGRCDAVGRSKRSRRAIDLPTHENHGLKTRQEKWMTGRMGERQLQKIERWLVRNPFFAVTALAIAYLVGNNKTQRVVIALLVLAVGPAYSAHCIGITDRDFIEGVHGGTWVSASLEQDKCVTVMAPDKPSLDISLQTVAIDGPAEARKVCYSAVLTHVKINDKCPSTGEAHLAEENDGDNACKRTYSDRGWGNGCGLFGKGSIVACAKFTCAKSMSLFEVDQTKIQYVIRAQLHVGAKQENWNTDIKTLKFDALSGSQEAEFTGYGKATLECQVQTAVDFGNSYIAEMEKDSWIVDRQWAQDLTLPWQSGSGGIWREMHHLVEFEPPHAATIRVLALGNQEGSLKTALTGAMRVTKDENDNNLYKLHGGHVSCRVKLSALTLKGTSYKMCTDKMSFVKNPTDTGHGTVVMQVKVPKGAPCKIPVIVADDLTAAVNKGILVTVNPIASTNDDEVLIEVNPPFGDSYIIVGTGDSRLTYQWHKEGSSIGKLFTQTMKGVERLAVMGDAAWDFSSAGGFFTSVGKGIHTVFGSAFQGLFGGLSWITKVIMGAVLIWVGINTRNMTMSMSMILVGVIMMFLSLGVGADQGCAVNFGKRELKCGDGIFVFRDSDDWLTKYSYYPEDPVKLASIIKASYEEGKCGLNSVDSLEHEMWRSRADEINAIFEENEVDISIVVQDPKNIYQRGTHPFSRIRDGLQYGWKTWGKNLIFSPGRKNGSFIIDGKSRKECPFSNRVWNSFQIEEFGMGVFTTRVFMDAVFDYSVDCDGAILGAAVNGKKSAHGSPTFWMGSHEVNGTWMMHTLETLDYKECEWPLTHTIGTSVEESDMFMPRSIGGPVSSHNHIPGYKVQTNGPWMQVPLEVRREPCPGTSVVVDTSCDGRGKSTRSTTDSGKIIPEWCCRSCTMPPVSFHGSDGCWYPMEIRPMKTHESHLVRSWVTAGEVHAVPFGLVSMMIAMEVVLRKRQGPKQMLVGGIILLGAMLVGQVTMLDLVKLIVAVGLHFHEINNGGDAMYMALIASFSIRPGLLIGFGLRTLWSPRERLVMAFGAAMVEVALGGMMGGLWQYLNAVSLCVLTINAISSRKASNTILPLMALLTPVTMYEVRMATMLFCTVVIVGVLHQNSKDTSMQKTIPIVALTLTSYMGLTQPFLGLCAYMSTQVFGRRSIPVNEALAAAGLVGVLAGLAFQDMENFLGPIAVGGILMMLVSVAGKVDGLELKKLGEVSWEEEAEISGSSSRYDVALSEQGEFKLLSEDKVPWDQIVMTSLALVGAAIHPFALLLVLGGWVLHIKGARRSGDVLWDIPTPKVIEECEHLEDGIYGIFQSTFLGASQRGVGVAQGGVFHTMWHVTRGAFLLRNGKKLVPSWASVKEDLVAYGGSWKLDGKWDGEEEVQLIAAVPGKAVVNVQTKPSLFKVRNGGEIGAVALDYPSGTSGSPIVNRSGEVVGLYGNGILVGDNSFVSAISQTEVKEESKEELQEIPTMLKKGMTTILDFHPGAGKTRRFLPQILAECARRRLRTLVLAPTRVVLSEMKEAFHGLDVKFHTQAFSAHGSGKEVIDAMCHATLTYRMLEPTRVVNWEVIIMDEAHFLDPASIAARGWAAHRARANESATILMTATPPGTSDEFPHSNGEIEDVQTDIPSEPWTSGHEWILADKRPTAWFLPSIRAANVMAASLRKAGKNVVVLNRKTFEKEYPTIKQKRPDFILATDIAEMGANLCVERVLDCRTAYKPVLVDEGRKVAIKGPLRISASSAAQRRGRIGRNPNRDGDSYYYSEPTSEDNAHHVCWLEASMLLDNMEVRGGMVAPLYGIEGTKTPVSPGEMRLRDDQRRVFRELVRGCDLPVWLSWQVAKAGLKTNDRKWCFEGPEEHEILNDNGETVKCRSPGGAKKALRPRWCDERVSSDQSALADFIKFAEGRRGAAEMLVVLTELPDFLAKKGGEAMDTISVFLHSEEGSRAYRNALSMMPEAMTIVMLFILAGLLTSGMVIFFMSPKGMSRMSMAMGTMAGSGYLMFLGGVKPTHISYVMLIFFVLMVVIIPEPGQQRSIQDNQVAYLIIGILTLLSVVAANELGMLEKTKEDFFGKRNIATSGGTIPWSWPDLDLKPGAAWTVYVGIVTMLSPMLHHWIKVEYGNLSLSGIAQSASVLSFMDKGVPFMKMNISVVILLVSGWNSITVIPLLCGVGGAMLHWTLILPGIKAQQSKLAQKRVFHGVAKNPVVDGNPTADIEEAPEMPALYEKKLALYLLLALSLMSVAMCRTPFSLAEGIVLSSAALGPLIEGNTSLLWNGPMAVSMTGVMRGNYYAFVGVMYNLWKMKTGRRGSANGKTLGEVWKRELNLLDKQQFELYKRTDITEVDRDMARRHLAEGKVDTGVAVSRGTAKLRWFHERGYVKLEGRVMDLGCGRGGWCYYAAAQKEVSGVKGYTLGRDGHEKPMNVQSLGWNIVTFKDKTDIHRLEPAKCETLLCDIGESSPSSVTEGERTLRVLETVEKWLACGVDNFCVKVLAPYMPDVIEKLELLQRRFGGTVIRNPLSRNSTHEMYYVSGARSNITFTVNQTSRLLMRRMRRPTGKVTLEPDVILPIGTRSVETDKGPLDRGAIEERVERIKTEYAATWFHDNDNPYRTWHYCGSYITKTSGSAASMINGVIKILTFPWDRIEEVTRMAMTDTTPFGQQRVFKEKVDTRAKDPPAGTRKIMRVVNRWLFRHLAREKKPRLCTKEEFIAKVRSHAAIGAFLEEQEQWKTANEAVQDPKFWEMVDAERKLHQQGRCQSCVYNMMGKREKKLSEFGKAKGSRAIWYMWLGARFLEFEALGFLNEDHWASRENSGGGVEGIGLQYLGYVIKDLSTKEGGGFYADDTAGWDTRITEADLDDEQEIMSYMNAEQRKLAWAVMEMTYKNKVVKVLRPAPGGKAFMDIISRRDQRGSGQVVTYALNTITNLKVQLIRMAEAEMVINHQHVNECDESALARLDAWLAENGCDRLARMAVSGDDCVVKPVDDRFGLALSHLNAMSKVRKDISEWQPSKGWTDWESVPFCSHHFHELVLKDGRKVVVPCRDQDELIGRGRVSPGNGWMIKETACLSKAYANMWSLMYFHKRDMRLLSFAVSSAVPTAWVPSGRTTWSVHGKGEWMTTEDMLDVWNRVWVLNNPHMKDKTTVKEWRDVPYLTKRQDKLCGSLIGMTNRATWASHIHLVIHRIRNLIGQEKYTDYLTVMDRYSVDADLQPGELI.

At 1 to 104 the chain is on the cytoplasmic side; that stretch reads MSGRKAQGKT…LSSRKRRSSE (104 aa). The segment at 38 to 72 is hydrophobic; homodimerization of capsid protein C; it reads PGPSRGVQGFIFFFLFNILTGKKLTTHLKRLWRML. The propeptide at 102 to 121 is ER anchor for the capsid protein C, removed in mature form by serine protease NS3; the sequence is SSEMTMMPLLILSMVILGGG. Residues 105–125 traverse the membrane as a helical segment; it reads MTMMPLLILSMVILGGGVTLV. Topologically, residues 126-244 are extracellular; that stretch reads RKNRWLLLNV…GERQLQKIER (119 aa). N-linked (GlcNAc...) asparagine; by host glycans are attached at residues asparagine 134 and asparagine 150. Residues 245 to 265 form a helical membrane-spanning segment; it reads WLVRNPFFAVTALAIAYLVGN. The Cytoplasmic segment spans residues 266-270; it reads NKTQR. A helical transmembrane segment spans residues 271–285; that stretch reads VVIALLVLAVGPAYS. The Extracellular portion of the chain corresponds to 286–730; it reads AHCIGITDRD…TVFGSAFQGL (445 aa). Cystine bridges form between cysteine 288/cysteine 315, cysteine 345/cysteine 401, cysteine 345/cysteine 406, cysteine 359/cysteine 390, cysteine 377/cysteine 401, cysteine 377/cysteine 406, cysteine 467/cysteine 568, and cysteine 585/cysteine 615. The interval 383-396 is fusion peptide; sequence DRGWGNGCGLFGKG. The helical transmembrane segment at 731 to 751 threads the bilayer; that stretch reads FGGLSWITKVIMGAVLIWVGI. At 752-757 the chain is on the extracellular side; sequence NTRNMT. Residues 758–778 traverse the membrane as a helical segment; the sequence is MSMSMILVGVIMMFLSLGVGA. Over 779-1132 the chain is Extracellular; the sequence is DQGCAVNFGK…LVRSWVTAGE (354 aa). 6 cysteine pairs are disulfide-bonded: cysteine 782/cysteine 793, cysteine 833/cysteine 921, cysteine 957/cysteine 1002, cysteine 1058/cysteine 1107, cysteine 1069/cysteine 1091, and cysteine 1090/cysteine 1094. N-linked (GlcNAc...) asparagine; by host glycans are attached at residues asparagine 908 and asparagine 986. Residues 1133–1153 form a helical membrane-spanning segment; it reads VHAVPFGLVSMMIAMEVVLRK. Over 1154–1201 the chain is Cytoplasmic; it reads RQGPKQMLVGGIILLGAMLVGQVTMLDLVKLIVAVGLHFHEINNGGDA. A helical membrane pass occupies residues 1202-1222; sequence MYMALIASFSIRPGLLIGFGL. At 1223–1287 the chain is on the lumenal side; sequence RTLWSPRERL…ILPLMALLTP (65 aa). A helical membrane pass occupies residues 1288–1308; the sequence is VTMYEVRMATMLFCTVVIVGV. The Cytoplasmic portion of the chain corresponds to 1309–1355; that stretch reads LHQNSKDTSMQKTIPIVALTLTSYMGLTQPFLGLCAYMSTQVFGRRS. A helical membrane pass occupies residues 1356–1376; it reads IPVNEALAAAGLVGVLAGLAF. At 1377-1378 the chain is on the lumenal side; the sequence is QD. A helical membrane pass occupies residues 1379–1399; it reads MENFLGPIAVGGILMMLVSVA. Residues 1400-1456 are Cytoplasmic-facing; that stretch reads GKVDGLELKKLGEVSWEEEAEISGSSSRYDVALSEQGEFKLLSEDKVPWDQIVMTSL. Positions 1407–1446 are interacts with and activates NS3 protease; that stretch reads LKKLGEVSWEEEAEISGSSSRYDVALSEQGEFKLLSEDKV. The helical intramembrane region spans 1457 to 1477; the sequence is ALVGAAIHPFALLLVLGGWVL. The Cytoplasmic portion of the chain corresponds to 1478 to 2157; sequence HIKGARRSGD…RNALSMMPEA (680 aa). The region spanning 1485–1665 is the Peptidase S7 domain; the sequence is SGDVLWDIPT…EVKEESKEEL (181 aa). Catalysis depends on charge relay system; for serine protease NS3 activity residues histidine 1537, aspartate 1561, and serine 1622. One can recognise a Helicase ATP-binding domain in the interval 1669–1825; sequence PTMLKKGMTT…HSNGEIEDVQ (157 aa). An important for RNA-binding region spans residues 1673 to 1676; the sequence is KKGM. 1682–1689 contributes to the ATP binding site; sequence FHPGAGKT. Positions 1773-1776 match the DEAH box motif; it reads DEAH. In terms of domain architecture, Helicase C-terminal spans 1820-1997; it reads EIEDVQTDIP…VRGGMVAPLY (178 aa). The residue at position 1877 (lysine 1877) is an N6-acetyllysine; by host. Residues 1942-1961 are disordered; sequence AAQRRGRIGRNPNRDGDSYY. The helical transmembrane segment at 2158 to 2178 threads the bilayer; it reads MTIVMLFILAGLLTSGMVIFF. Residues 2179–2186 lie on the Lumenal side of the membrane; the sequence is MSPKGMSR. The helical intramembrane region spans 2187-2207; sequence MSMAMGTMAGSGYLMFLGGVK. Residues 2208–2209 are Lumenal-facing; it reads PT. The helical transmembrane segment at 2210–2230 threads the bilayer; that stretch reads HISYVMLIFFVLMVVIIPEPG. Topologically, residues 2231–2241 are cytoplasmic; that stretch reads QQRSIQDNQVA. A helical membrane pass occupies residues 2242–2262; it reads YLIIGILTLLSVVAANELGML. Residues 2263-2293 are Lumenal-facing; that stretch reads EKTKEDFFGKRNIATSGGTIPWSWPDLDLKP. Residues 2294–2314 constitute an intramembrane region (helical); the sequence is GAAWTVYVGIVTMLSPMLHHW. Topologically, residues 2315–2360 are lumenal; sequence IKVEYGNLSLSGIAQSASVLSFMDKGVPFMKMNISVVILLVSGWNS. Residues 2361–2380 form a helical membrane-spanning segment; that stretch reads ITVIPLLCGVGGAMLHWTLI. At 2381–2421 the chain is on the cytoplasmic side; that stretch reads LPGIKAQQSKLAQKRVFHGVAKNPVVDGNPTADIEEAPEMP. A helical transmembrane segment spans residues 2422 to 2442; it reads ALYEKKLALYLLLALSLMSVA. Over 2443 to 2445 the chain is Lumenal; the sequence is MCR. Residues 2446 to 2466 traverse the membrane as a helical segment; it reads TPFSLAEGIVLSSAALGPLIE. Over 2467–3411 the chain is Cytoplasmic; it reads GNTSLLWNGP…VDADLQPGEL (945 aa). One can recognise an mRNA cap 0-1 NS5-type MT domain in the interval 2508 to 2772; sequence GSANGKTLGE…DVILPIGTRS (265 aa). Serine 2563 is an S-adenosyl-L-methionine binding site. Serine 2563 bears the Phosphoserine mark. Lysine 2568 (for 2'-O-MTase activity) is an active-site residue. S-adenosyl-L-methionine contacts are provided by glycine 2593, tryptophan 2594, threonine 2611, leucine 2612, aspartate 2638, and isoleucine 2639. The active-site For 2'-O-MTase activity is aspartate 2653. Isoleucine 2654 contacts S-adenosyl-L-methionine. Catalysis depends on for 2'-O-MTase activity residues lysine 2689 and glutamate 2725. Tyrosine 2727 serves as a coordination point for S-adenosyl-L-methionine. Residues 2879-2912 carry the Nuclear localization signal motif; it reads RKIMRVVNRWLFRHLAREKKPRLCTKEEFIAKVR. Positions 2946, 2950, 2955, and 2958 each coordinate Zn(2+). Residues 3036 to 3188 form the RdRp catalytic domain; that stretch reads GGFYADDTAG…KPVDDRFGLA (153 aa). 3 residues coordinate Zn(2+): histidine 3223, cysteine 3239, and cysteine 3358.

This sequence in the N-terminal section; belongs to the class I-like SAM-binding methyltransferase superfamily. mRNA cap 0-1 NS5-type methyltransferase family. In terms of assembly, homodimer. Interacts (via N-terminus) with host EXOC1 (via C-terminus); this interaction results in EXOC1 degradation through the proteasome degradation pathway. Forms heterodimers with envelope protein E in the endoplasmic reticulum and Golgi. As to quaternary structure, homodimer; in the endoplasmic reticulum and Golgi. Interacts with protein prM. Interacts with non-structural protein 1. In terms of assembly, homodimer; Homohexamer when secreted. Interacts with envelope protein E. Interacts (via N-terminus) with serine protease NS3. As to quaternary structure, forms a heterodimer with serine protease NS3. May form homooligomers. In terms of assembly, forms a heterodimer with NS2B. Interacts with non-structural protein 2A (via N-terminus). Interacts with NS4B. Interacts with unphosphorylated RNA-directed RNA polymerase NS5; this interaction stimulates RNA-directed RNA polymerase NS5 guanylyltransferase activity. NS3 interacts with host PDCD6IP; this interaction contributes to virion release. Interacts with serine protease NS3. As to quaternary structure, homodimer. Interacts with host STAT2; this interaction prevents the establishment of cellular antiviral state. Interacts with serine protease NS3. Interacts with host TRIM23; this interaction leads to NS5 ubiquitination. Post-translationally, specific enzymatic cleavages in vivo yield mature proteins. The nascent capsid protein C contains a C-terminal hydrophobic domain that act as a signal sequence for translocation of prM into the lumen of the ER. Mature capsid protein C is cleaved at a site upstream of this hydrophobic domain by NS3. prM is cleaved in post-Golgi vesicles by a host furin, releasing the mature small envelope protein M, and peptide pr. Non-structural protein 2A-alpha, a C-terminally truncated form of non-structural protein 2A, results from partial cleavage by NS3. Specific enzymatic cleavages in vivo yield mature proteins peptide 2K acts as a signal sequence and is removed from the N-terminus of NS4B by the host signal peptidase in the ER lumen. Signal cleavage at the 2K-4B site requires a prior NS3 protease-mediated cleavage at the 4A-2K site. Cleaved in post-Golgi vesicles by a host furin, releasing the mature small envelope protein M, and peptide pr. This cleavage is incomplete as up to 30% of viral particles still carry uncleaved prM. In terms of processing, N-glycosylated. Post-translationally, N-glycosylated. The excreted form is glycosylated and this is required for efficient secretion of the protein from infected cells. Polyubiquitinated; ubiquitination is probably mediated by host TRIM23 and is prerequisite for NS5-STAT2 interaction. NS5 is not ISGylated or sumoylated. In terms of processing, acetylated by host KAT5. Acetylation modulates NS3 RNA-binding and unwinding activities and plays an important positive role for viral replication. Post-translationally, phosphorylated on serines residues. This phosphorylation may trigger NS5 nuclear localization.

Its subcellular location is the virion. The protein localises to the host nucleus. The protein resides in the host cytoplasm. It localises to the host perinuclear region. It is found in the secreted. Its subcellular location is the virion membrane. The protein localises to the host endoplasmic reticulum membrane. The catalysed reaction is Selective hydrolysis of -Xaa-Xaa-|-Yaa- bonds in which each of the Xaa can be either Arg or Lys and Yaa can be either Ser or Ala.. It catalyses the reaction RNA(n) + a ribonucleoside 5'-triphosphate = RNA(n+1) + diphosphate. It carries out the reaction a ribonucleoside 5'-triphosphate + H2O = a ribonucleoside 5'-diphosphate + phosphate + H(+). The enzyme catalyses ATP + H2O = ADP + phosphate + H(+). The catalysed reaction is a 5'-end (5'-triphosphoguanosine)-ribonucleoside in mRNA + S-adenosyl-L-methionine = a 5'-end (N(7)-methyl 5'-triphosphoguanosine)-ribonucleoside in mRNA + S-adenosyl-L-homocysteine. It catalyses the reaction a 5'-end (N(7)-methyl 5'-triphosphoguanosine)-ribonucleoside in mRNA + S-adenosyl-L-methionine = a 5'-end (N(7)-methyl 5'-triphosphoguanosine)-(2'-O-methyl-ribonucleoside) in mRNA + S-adenosyl-L-homocysteine + H(+). Plays a role in virus budding by binding to the cell membrane and gathering the viral RNA into a nucleocapsid that forms the core of a mature virus particle. During virus entry, may induce genome penetration into the host cytoplasm after hemifusion induced by the surface proteins. Can migrate to the cell nucleus where it modulates host functions. Its function is as follows. Inhibits RNA silencing by interfering with host Dicer. In terms of biological role, prevents premature fusion activity of envelope proteins in trans-Golgi by binding to envelope protein E at pH6.0. After virion release in extracellular space, gets dissociated from E dimers. Functionally, acts as a chaperone for envelope protein E during intracellular virion assembly by masking and inactivating envelope protein E fusion peptide. prM is the only viral peptide matured by host furin in the trans-Golgi network probably to avoid catastrophic activation of the viral fusion activity in acidic Golgi compartment prior to virion release. prM-E cleavage is inefficient, and many virions are only partially matured. These uncleaved prM would play a role in immune evasion. May play a role in virus budding. Exerts cytotoxic effects by activating a mitochondrial apoptotic pathway through M ectodomain. May display a viroporin activity. Its function is as follows. Binds to host cell surface receptor and mediates fusion between viral and cellular membranes. Envelope protein is synthesized in the endoplasmic reticulum in the form of heterodimer with protein prM. They play a role in virion budding in the ER, and the newly formed immature particle is covered with 60 spikes composed of heterodimer between precursor prM and envelope protein E. The virion is transported to the Golgi apparatus where the low pH causes dissociation of PrM-E heterodimers and formation of E homodimers. prM-E cleavage is inefficient, and many virions are only partially matured. These uncleaved prM would play a role in immune evasion. In terms of biological role, involved in immune evasion, pathogenesis and viral replication. Once cleaved off the polyprotein, is targeted to three destinations: the viral replication cycle, the plasma membrane and the extracellular compartment. Essential for viral replication. Required for formation of the replication complex and recruitment of other non-structural proteins to the ER-derived membrane structures. Excreted as a hexameric lipoparticle that plays a role against host immune response. Antagonizing the complement function. Binds to the host macrophages and dendritic cells. Inhibits signal transduction originating from Toll-like receptor 3 (TLR3). Functionally, component of the viral RNA replication complex that functions in virion assembly and antagonizes the host immune response. Required cofactor for the serine protease function of NS3. May have membrane-destabilizing activity and form viroporins. Its function is as follows. Displays three enzymatic activities: serine protease, NTPase and RNA helicase. NS3 serine protease, in association with NS2B, performs its autocleavage and cleaves the polyprotein at dibasic sites in the cytoplasm: C-prM, NS2A-NS2B, NS2B-NS3, NS3-NS4A, NS4A-2K and NS4B-NS5. NS3 RNA helicase binds RNA and unwinds dsRNA in the 3' to 5' direction. Also plays a role in virus assembly. In terms of biological role, regulates the ATPase activity of the NS3 helicase activity. NS4A allows NS3 helicase to conserve energy during unwinding. Functionally, functions as a signal peptide for NS4B and is required for the interferon antagonism activity of the latter. Induces the formation of ER-derived membrane vesicles where the viral replication takes place. Inhibits interferon (IFN)-induced host STAT1 phosphorylation and nuclear translocation, thereby preventing the establishment of cellular antiviral state by blocking the IFN-alpha/beta pathway. Its function is as follows. Replicates the viral (+) and (-) RNA genome, and performs the capping of genomes in the cytoplasm. NS5 methylates viral RNA cap at guanine N-7 and ribose 2'-O positions. Besides its role in RNA genome replication, also prevents the establishment of cellular antiviral state by blocking the interferon-alpha/beta (IFN-alpha/beta) signaling pathway. IFN-I induces binding of NS5 to host IFN-activated transcription factor STAT2, preventing its transcriptional activity. Host TRIM23 is the E3 ligase that interacts with and polyubiquitinates NS5 to promote its binding to STAT2 and trigger IFN-I signaling inhibition. This chain is Genome polyprotein, found in Yellow fever virus (isolate Uganda/A7094A4/1948) (YFV).